Reading from the N-terminus, the 81-residue chain is Conotoxin Im6.1 (81 aa).

Residues 1-20 (MSKLGVVLFTLLLLVPLVTP) form the signal peptide. A propeptide spanning residues 21–47 (ERDGGKWTMLAKNKKAMKRNLMDFITR) is cleaved from the precursor. 3 cysteine pairs are disulfide-bonded: Cys-49–Cys-61, Cys-54–Cys-67, and Cys-60–Cys-76.

This sequence belongs to the conotoxin M superfamily. Expressed by the venom duct.

Its subcellular location is the secreted. The sequence is that of Conotoxin Im6.1 from Conus imperialis (Imperial cone).